The following is a 340-amino-acid chain: 4-amino-5-hydroxymethyl-2-methylpyrimidine phosphate synthase THI5 (340 aa).

An N6-(pyridoxal phosphate)lysine modification is found at Lys-62. The active site involves His-66. 115–118 contributes to the pyridoxal 5'-phosphate binding site; it reads GEFG. Positions 195 to 199 match the CCCFC; essential for catalytic activity, may be the site of iron coordination motif; sequence CCCFC.

This sequence belongs to the NMT1/THI5 family. In terms of assembly, homodimer. Fe cation serves as cofactor.

It carries out the reaction N(6)-(pyridoxal phosphate)-L-lysyl-[4-amino-5-hydroxymethyl-2-methylpyrimidine phosphate synthase] + L-histidyl-[4-amino-5-hydroxymethyl-2-methylpyrimidine phosphate synthase] + 2 Fe(3+) + 4 H2O = L-lysyl-[4-amino-5-hydroxymethyl-2-methylpyrimidine phosphate synthase] + (2S)-2-amino-5-hydroxy-4-oxopentanoyl-[4-amino-5-hydroxymethyl-2-methylpyrimidine phosphate synthase] + 4-amino-2-methyl-5-(phosphooxymethyl)pyrimidine + 3-oxopropanoate + 2 Fe(2+) + 2 H(+). It participates in cofactor biosynthesis; thiamine diphosphate biosynthesis. Its function is as follows. Responsible for the formation of the pyrimidine heterocycle in the thiamine biosynthesis pathway. Catalyzes the formation of hydroxymethylpyrimidine phosphate (HMP-P) from histidine and pyridoxal phosphate (PLP). The protein uses PLP and the active site histidine to form HMP-P, generating an inactive enzyme. The enzyme can only undergo a single turnover, which suggests it is a suicide enzyme. The sequence is that of 4-amino-5-hydroxymethyl-2-methylpyrimidine phosphate synthase THI5 from Saccharomyces cerevisiae (strain ATCC 204508 / S288c) (Baker's yeast).